A 380-amino-acid chain; its full sequence is Queuine tRNA-ribosyltransferase (380 aa).

Catalysis depends on aspartate 96, which acts as the Proton acceptor. Substrate is bound by residues 96–100 (DSGGF), aspartate 150, glutamine 193, and glycine 220. Positions 251–257 (GVGAPDS) are RNA binding. Residue aspartate 270 is the Nucleophile of the active site. Residues 275–279 (TRIAR) form an RNA binding; important for wobble base 34 recognition region. Cysteine 308, cysteine 310, cysteine 313, and histidine 339 together coordinate Zn(2+).

This sequence belongs to the queuine tRNA-ribosyltransferase family. Homodimer. Within each dimer, one monomer is responsible for RNA recognition and catalysis, while the other monomer binds to the replacement base PreQ1. Requires Zn(2+) as cofactor.

It catalyses the reaction 7-aminomethyl-7-carbaguanine + guanosine(34) in tRNA = 7-aminomethyl-7-carbaguanosine(34) in tRNA + guanine. Its pathway is tRNA modification; tRNA-queuosine biosynthesis. Its function is as follows. Catalyzes the base-exchange of a guanine (G) residue with the queuine precursor 7-aminomethyl-7-deazaguanine (PreQ1) at position 34 (anticodon wobble position) in tRNAs with GU(N) anticodons (tRNA-Asp, -Asn, -His and -Tyr). Catalysis occurs through a double-displacement mechanism. The nucleophile active site attacks the C1' of nucleotide 34 to detach the guanine base from the RNA, forming a covalent enzyme-RNA intermediate. The proton acceptor active site deprotonates the incoming PreQ1, allowing a nucleophilic attack on the C1' of the ribose to form the product. After dissociation, two additional enzymatic reactions on the tRNA convert PreQ1 to queuine (Q), resulting in the hypermodified nucleoside queuosine (7-(((4,5-cis-dihydroxy-2-cyclopenten-1-yl)amino)methyl)-7-deazaguanosine). The sequence is that of Queuine tRNA-ribosyltransferase from Streptococcus thermophilus (strain ATCC BAA-250 / LMG 18311).